The following is a 223-amino-acid chain: Deoxyribose-phosphate aldolase (223 aa).

Catalysis depends on Asp-89, which acts as the Proton donor/acceptor. Lys-152 functions as the Schiff-base intermediate with acetaldehyde in the catalytic mechanism. The active-site Proton donor/acceptor is the Lys-181.

The protein belongs to the DeoC/FbaB aldolase family. DeoC type 1 subfamily.

It localises to the cytoplasm. It catalyses the reaction 2-deoxy-D-ribose 5-phosphate = D-glyceraldehyde 3-phosphate + acetaldehyde. It functions in the pathway carbohydrate degradation; 2-deoxy-D-ribose 1-phosphate degradation; D-glyceraldehyde 3-phosphate and acetaldehyde from 2-deoxy-alpha-D-ribose 1-phosphate: step 2/2. In terms of biological role, catalyzes a reversible aldol reaction between acetaldehyde and D-glyceraldehyde 3-phosphate to generate 2-deoxy-D-ribose 5-phosphate. The sequence is that of Deoxyribose-phosphate aldolase from Listeria welshimeri serovar 6b (strain ATCC 35897 / DSM 20650 / CCUG 15529 / CIP 8149 / NCTC 11857 / SLCC 5334 / V8).